A 203-amino-acid chain; its full sequence is Small ribosomal subunit protein uS4 (203 aa).

In terms of domain architecture, S4 RNA-binding spans 93 to 153; the sequence is RRFDNVVFRA…QKSQNLDAVA (61 aa).

This sequence belongs to the universal ribosomal protein uS4 family. Part of the 30S ribosomal subunit. Contacts protein S5. The interaction surface between S4 and S5 is involved in control of translational fidelity.

Functionally, one of the primary rRNA binding proteins, it binds directly to 16S rRNA where it nucleates assembly of the body of the 30S subunit. Its function is as follows. With S5 and S12 plays an important role in translational accuracy. This Chlorobium phaeobacteroides (strain BS1) protein is Small ribosomal subunit protein uS4.